The sequence spans 554 residues: Acurin A biosynthesis cluster MFS-type transporter (554 aa).

Helical transmembrane passes span W24 to I44, L60 to G80, L96 to L116, G123 to L143, and G151 to F171. A glycan (N-linked (GlcNAc...) asparagine) is linked at N174. A run of 3 helical transmembrane segments spans residues W179–L199, W219–A239, and I251–P271. N283 carries N-linked (GlcNAc...) asparagine glycosylation. 6 consecutive transmembrane segments (helical) span residues L289–I309, V324–M344, S352–D372, I385–S405, T417–F437, and V496–A516.

It belongs to the major facilitator superfamily.

The protein localises to the membrane. In terms of biological role, MFS-type transporter that may have a role in the biosynthesis of acurin A, a highly reduced polyketide coupled to a serine via a peptide bond; either in extra- or intracellular transport. The protein is Acurin A biosynthesis cluster MFS-type transporter of Aspergillus aculeatus (strain ATCC 16872 / CBS 172.66 / WB 5094).